The following is a 27-amino-acid chain: Caerulein precursor fragment R1 (27 aa).

Expressed by the skin glands.

The protein localises to the secreted. Antimicrobial peptide. This is Caerulein precursor fragment R1 from Xenopus ruwenzoriensis (Uganda clawed frog).